Here is an 892-residue protein sequence, read N- to C-terminus: Alanine--tRNA ligase (892 aa).

Positions 577, 581, 680, and 684 each coordinate Zn(2+).

This sequence belongs to the class-II aminoacyl-tRNA synthetase family. Requires Zn(2+) as cofactor.

Its subcellular location is the cytoplasm. It catalyses the reaction tRNA(Ala) + L-alanine + ATP = L-alanyl-tRNA(Ala) + AMP + diphosphate. In terms of biological role, catalyzes the attachment of alanine to tRNA(Ala) in a two-step reaction: alanine is first activated by ATP to form Ala-AMP and then transferred to the acceptor end of tRNA(Ala). Also edits incorrectly charged Ser-tRNA(Ala) and Gly-tRNA(Ala) via its editing domain. This chain is Alanine--tRNA ligase, found in Arthrobacter sp. (strain FB24).